The following is a 302-amino-acid chain: Putative 2-dehydro-3-deoxy-D-gluconate aldolase YagE (302 aa).

Catalysis depends on charge relay system residues Ser-49 and Tyr-112. The active-site Proton donor is the Tyr-138. Catalysis depends on Lys-167, which acts as the Schiff-base intermediate with substrate.

Belongs to the DapA family. As to quaternary structure, a dimer of dimers.

The protein resides in the cytoplasm. The enzyme catalyses 2-dehydro-3-deoxy-D-gluconate = D-glyceraldehyde + pyruvate. It catalyses the reaction 2-dehydro-3-deoxy-D-arabinonate = glycolaldehyde + pyruvate. In terms of biological role, catalyzes the formation of 2-keto-3-deoxy-gluconate (KDG) from pyruvate and glyceraldehyde. May also function as a 2-dehydro-3-deoxy-D-pentonate aldolase. Overexpression leads to increased growth (over 2 hours) in the presence of the antibiotics norfloxacin, ampicillin and streptomycin. The sequence is that of Putative 2-dehydro-3-deoxy-D-gluconate aldolase YagE (yagE) from Escherichia coli (strain K12).